A 420-amino-acid polypeptide reads, in one-letter code: Glutamyl-tRNA reductase (420 aa).

Substrate contacts are provided by residues threonine 49–arginine 52, serine 109, glutamate 114–glutamine 116, and glutamine 120. Cysteine 50 (nucleophile) is an active-site residue. Glycine 189–isoleucine 194 provides a ligand contact to NADP(+).

Belongs to the glutamyl-tRNA reductase family. In terms of assembly, homodimer.

It carries out the reaction (S)-4-amino-5-oxopentanoate + tRNA(Glu) + NADP(+) = L-glutamyl-tRNA(Glu) + NADPH + H(+). Its pathway is porphyrin-containing compound metabolism; protoporphyrin-IX biosynthesis; 5-aminolevulinate from L-glutamyl-tRNA(Glu): step 1/2. In terms of biological role, catalyzes the NADPH-dependent reduction of glutamyl-tRNA(Glu) to glutamate 1-semialdehyde (GSA). This is Glutamyl-tRNA reductase from Photorhabdus laumondii subsp. laumondii (strain DSM 15139 / CIP 105565 / TT01) (Photorhabdus luminescens subsp. laumondii).